The sequence spans 150 residues: Large ribosomal subunit protein bL9 (150 aa).

Belongs to the bacterial ribosomal protein bL9 family.

Binds to the 23S rRNA. In Leuconostoc citreum (strain KM20), this protein is Large ribosomal subunit protein bL9.